Consider the following 239-residue polypeptide: Tetraspanin-9 (239 aa).

Residues 1 to 12 (MARGCLCCVKYM) lie on the Cytoplasmic side of the membrane. The helical transmembrane segment at 13-33 (LFLFNLLFWLGGCGLLGVGVW) threads the bilayer. Topologically, residues 34–55 (LSVSQGSFATLSPSFPSISAAN) are extracellular. A helical membrane pass occupies residues 56-76 (LIITLGAVIMVTGFLGCLGAI). Topologically, residues 77-85 (KENKCLLLS) are cytoplasmic. Residues 86–106 (FFITLLVILLAELILLILFFV) traverse the membrane as a helical segment. At 107–203 (YTDNVSENAR…VEEWLDDNKH (97 aa)) the chain is on the extracellular side. Asparagine 110 and asparagine 180 each carry an N-linked (GlcNAc...) asparagine glycan. Residues 204–224 (LLGTIAMCVLVIQLLGMAFSM) traverse the membrane as a helical segment. Residues 225 to 239 (TLYQQIHRSGKKYEA) lie on the Cytoplasmic side of the membrane.

The protein belongs to the tetraspanin (TM4SF) family.

It is found in the membrane. The sequence is that of Tetraspanin-9 (tspan9) from Salmo salar (Atlantic salmon).